The following is a 203-amino-acid chain: Snake venom metalloproteinase atroxase (203 aa).

E1 bears the Pyrrolidone carboxylic acid (Glu) mark. N-linked (GlcNAc...) asparagine glycosylation occurs at N5. The 195-residue stretch at R9–K203 folds into the Peptidase M12B domain. Ca(2+)-binding residues include E12 and D96. Residue H145 coordinates Zn(2+). The active site involves E146. Zn(2+)-binding residues include H149 and H155. A disulfide bond links C160 and C167. N202 provides a ligand contact to Ca(2+).

Belongs to the venom metalloproteinase (M12B) family. P-I subfamily. As to quaternary structure, monomer. The cofactor is Zn(2+). The N-terminus is blocked. Expressed by the venom gland.

Its subcellular location is the secreted. It catalyses the reaction Cleavage of 5-His-|-Leu-6, 9-Ser-|-His-10, 10-His-|-Leu-11, 14-Ala-|-Leu-15 and 16-Tyr-|-Leu-17 in insulin B chain.. Inhibited by EDTA and alpha2-macroglobulin. Snake venom zinc metalloprotease that has Aalpha, Bbeta fibrin(ogen)olytic activities. It cleaves the Aalpha chain of fibrinogen first followed by the Bbeta chain and shows no effect on the gamma chain. Does not induce or inhibit platelet aggregation, and is unable to activate plasminogen. Exhibits low lethality when tested on mice. Intravenous administration results in thrombolysis within one hour followed by recanalization. Fibrinogenolytic activity results in a 60% decrease in the rat's plasma fibrinogen level. Histological examination of kidney, liver, heart and lung tissue shows no necrosis nor hemorrhage. The protein is Snake venom metalloproteinase atroxase of Crotalus atrox (Western diamondback rattlesnake).